Here is a 229-residue protein sequence, read N- to C-terminus: MLVCIPEVLPKSEVAEFRRLMDAADWEDGRSTAGAQSAMVKRNEQLPPDSDLARALGRRIVSALTGNPKFVSAAVPLQIFPPLFNRYAASGGHHFGIHVDNAVRGDHLTGLRIRTDLSVTLFLAEPDEYDGGELVIEDTYGSHEVKLAAGDAVLYPSTSLHMVTPVTRGARVASFFWLQSMIRDAQARSMIYDLDNAIQALVERLGRDDPETVKLTGIYHNLIRYWAEV.

The region spanning 78-180 is the Fe2OG dioxygenase domain; that stretch reads QIFPPLFNRY…RVASFFWLQS (103 aa). The Fe cation site is built by His98, Asp100, and His161. Arg171 contacts 2-oxoglutarate.

It depends on Fe(2+) as a cofactor. The cofactor is L-ascorbate.

In Rhodopseudomonas palustris (strain ATCC BAA-98 / CGA009), this protein is PKHD-type hydroxylase RPA3479.